The primary structure comprises 244 residues: 7-cyano-7-deazaguanine synthase (244 aa).

F14–V24 lines the ATP pocket. Zn(2+) contacts are provided by C202, C217, C220, and C223.

This sequence belongs to the QueC family. It depends on Zn(2+) as a cofactor.

The enzyme catalyses 7-carboxy-7-deazaguanine + NH4(+) + ATP = 7-cyano-7-deazaguanine + ADP + phosphate + H2O + H(+). It functions in the pathway purine metabolism; 7-cyano-7-deazaguanine biosynthesis. Functionally, catalyzes the ATP-dependent conversion of 7-carboxy-7-deazaguanine (CDG) to 7-cyano-7-deazaguanine (preQ(0)). The chain is 7-cyano-7-deazaguanine synthase from Burkholderia thailandensis (strain ATCC 700388 / DSM 13276 / CCUG 48851 / CIP 106301 / E264).